The chain runs to 351 residues: Homeobox protein rough sheath 1 (351 aa).

Disordered stretches follow at residues 1-23 (MDQSFGNLGAGAGSSSGGSNSKA), 57-82 (AAAPSSSQQHQQQQHHHHYARHGAEM), and 187-229 (GGGS…PRAE). Over residues 57 to 68 (AAAPSSSQQHQQ) the composition is skewed to low complexity. Positions 214–229 (PNGRENDPPEIDPRAE) are enriched in basic and acidic residues. The 21-residue stretch at 232 to 252 (ELKYQLLKKYSGYLSSLRQEF) folds into the ELK domain. Residues 253–316 (SKKKKKGKLP…NQRKRHWKPS (64 aa)) constitute a DNA-binding region (homeobox; TALE-type).

Belongs to the TALE/KNOX homeobox family.

Its subcellular location is the nucleus. Functionally, plays a possible role in patterning the placement of lateral organs along the axis of the shoot. Mutations in RS1 alters cell fate and causes unregulated cell division and expansion in the leaf. Probably binds to the DNA sequence 5'-TGAC-3'. This is Homeobox protein rough sheath 1 (RS1) from Zea mays (Maize).